An 80-amino-acid chain; its full sequence is UPF0154 protein SaurJH1_1431 (80 aa).

A helical transmembrane segment spans residues 4–24 (WLAIIFIVAALILGLIGGFLL).

This sequence belongs to the UPF0154 family.

The protein localises to the cell membrane. The protein is UPF0154 protein SaurJH1_1431 of Staphylococcus aureus (strain JH1).